Reading from the N-terminus, the 718-residue chain is Methionine--tRNA ligase (718 aa).

The 'HIGH' region signature appears at 27 to 37; that stretch reads PYANGQIHIGH. Zn(2+)-binding residues include C158, C161, C171, and C174. A 'KMSKS' region motif is present at residues 348–352; sequence KMSKS. ATP is bound at residue K351. A tRNA-binding domain is found at 612 to 718; the sequence is DFAKIDLRIA…SGAKPGMRVK (107 aa).

The protein belongs to the class-I aminoacyl-tRNA synthetase family. MetG type 1 subfamily. In terms of assembly, homodimer. Zn(2+) is required as a cofactor.

The protein resides in the cytoplasm. It catalyses the reaction tRNA(Met) + L-methionine + ATP = L-methionyl-tRNA(Met) + AMP + diphosphate. Its function is as follows. Is required not only for elongation of protein synthesis but also for the initiation of all mRNA translation through initiator tRNA(fMet) aminoacylation. This Burkholderia cenocepacia (strain ATCC BAA-245 / DSM 16553 / LMG 16656 / NCTC 13227 / J2315 / CF5610) (Burkholderia cepacia (strain J2315)) protein is Methionine--tRNA ligase.